The chain runs to 917 residues: MFARLVRSIFGSSNDRSLRGYQRRVQQINALEPELAALTDAELQARTILLKQKLADGATLDGILPEAFAIVREASKRVFGMRHFDVQLIGGMVLHDGKIAEMRTGEGKTLVATLPVYLNALTGKGVHVVTVNDYLARRDAETMGQLYSFLGLSTGIVVHGQEELERRAAYHADITYGTNNEFGFDYLRDNMKYRLEDMVQRDFTYAIVDEVDSILIDEARTPLIISGPAEDSSNLYRSVDAVVRELVKDPAAFEKDEKQRSVHLTEAGSEKVEEMLHASGILTDGNLYDTFNITVLHHVQQSLRAHTLFERNVEYIVRDDKVIIIDEFTGRMMDGRRYSEGLHQALEAKEHVTVQQENQTLASITFQNYFRMYPKLAGMTGTALTEADEFAEIYKLDVLAVPTNLPVQRKDGDDEVYRTAREKYEAVANLIEEIRTRGQPVLVGTTSIEKSEVIKQLLDQKRIPAELLNAKQHEREAIIVAEAGAPGRVTIATNMAGRGTDIKLGGNAEARIQTELADMPEGPERDAAIARIEQEVQEAHEAVRKAGGLFVIGTERHESRRIDNQLRGRSGRQGDPGESRFFLSLEDDLMRIFGSDRMGAMLQRLGLKDGEAIIHPWINKALEKAQKKVEARNFDMRKNVLKYDDVMNDQRKEVYAQRREFMNADDVSETVADMREEVIDTLITRHIPERAFQEQWDTAGLAAGLRALLNADIPVEQWGREEGVDEAEMRRRVQAAATELMDVKAAHAGADAMRYIEKALLLQTLDQVWKEHLLLLDQLRQGIGLRAYGQRDPLNEYKSEAFSLFNAMLDELKQRVTAILAQVEFGAPPPASADPFVSGSSQFVESHPEPVSIRMAVGPNGEDIPLPPPPPAMFSAAYADVEGIDFNDPSTWINVPRNAPCPCGSGQKYKHCHGRLG.

ATP-binding positions include Gln87, Gly105 to Thr109, and Asp501. Positions 901, 903, 912, and 913 each coordinate Zn(2+).

The protein belongs to the SecA family. In terms of assembly, monomer and homodimer. Part of the essential Sec protein translocation apparatus which comprises SecA, SecYEG and auxiliary proteins SecDF-YajC and YidC. The cofactor is Zn(2+).

It localises to the cell inner membrane. Its subcellular location is the cytoplasm. The catalysed reaction is ATP + H2O + cellular proteinSide 1 = ADP + phosphate + cellular proteinSide 2.. Its function is as follows. Part of the Sec protein translocase complex. Interacts with the SecYEG preprotein conducting channel. Has a central role in coupling the hydrolysis of ATP to the transfer of proteins into and across the cell membrane, serving both as a receptor for the preprotein-SecB complex and as an ATP-driven molecular motor driving the stepwise translocation of polypeptide chains across the membrane. The polypeptide is Protein translocase subunit SecA (Granulibacter bethesdensis (strain ATCC BAA-1260 / CGDNIH1)).